We begin with the raw amino-acid sequence, 80 residues long: Cell division protein ZapB (80 aa).

The stretch at 3 to 80 (LEILEQLEAK…GLLGKMEEVE (78 aa)) forms a coiled coil. Positions 41–62 (LEQANNGRSEVEQEAQKARDEQ) are disordered. The span at 49-62 (SEVEQEAQKARDEQ) shows a compositional bias: basic and acidic residues.

It belongs to the ZapB family. Homodimer. The ends of the coiled-coil dimer bind to each other, forming polymers. Interacts with FtsZ.

The protein localises to the cytoplasm. Non-essential, abundant cell division factor that is required for proper Z-ring formation. It is recruited early to the divisome by direct interaction with FtsZ, stimulating Z-ring assembly and thereby promoting cell division earlier in the cell cycle. Its recruitment to the Z-ring requires functional FtsA or ZipA. This chain is Cell division protein ZapB, found in Aliivibrio salmonicida (strain LFI1238) (Vibrio salmonicida (strain LFI1238)).